Consider the following 359-residue polypeptide: Protein Wnt-5b (359 aa).

A signal peptide spans 1–17 (MPSLLLLFTAALLSSWA). A disulfide bond links Cys83 and Cys94. Asn93 and Asn99 each carry an N-linked (GlcNAc...) asparagine glycan. 10 disulfides stabilise this stretch: Cys133/Cys141, Cys143/Cys161, Cys217/Cys231, Cys219/Cys226, Cys288/Cys319, Cys304/Cys314, Cys318/Cys358, Cys334/Cys349, Cys336/Cys346, and Cys341/Cys342. A lipid anchor (O-palmitoleoyl serine; by PORCN) is attached at Ser223. 2 N-linked (GlcNAc...) asparagine glycosylation sites follow: Asn291 and Asn305.

Belongs to the Wnt family. Interacts with PORCN. Palmitoleoylation is required for efficient binding to frizzled receptors. Depalmitoleoylation leads to Wnt signaling pathway inhibition.

It is found in the secreted. It localises to the extracellular space. The protein resides in the extracellular matrix. Functionally, ligand for members of the frizzled family of seven transmembrane receptors. Probable developmental protein. May be a signaling molecule which affects the development of discrete regions of tissues. Is likely to signal over only few cell diameters. The chain is Protein Wnt-5b (WNT5B) from Homo sapiens (Human).